The sequence spans 122 residues: Fluoride-specific ion channel FluC (122 aa).

A run of 4 helical transmembrane segments spans residues 4–24 (LAVL…SIFI), 33–53 (LGTM…SIYL), 66–86 (LLIT…LEGI), and 95–115 (LKAF…VALG). 2 residues coordinate Na(+): glycine 73 and threonine 76.

This sequence belongs to the fluoride channel Fluc/FEX (TC 1.A.43) family.

The protein localises to the cell inner membrane. The enzyme catalyses fluoride(in) = fluoride(out). Na(+) is not transported, but it plays an essential structural role and its presence is essential for fluoride channel function. Functionally, fluoride-specific ion channel. Important for reducing fluoride concentration in the cell, thus reducing its toxicity. This chain is Fluoride-specific ion channel FluC, found in Hydrogenobaculum sp. (strain Y04AAS1).